The sequence spans 329 residues: MNKKTIAMLGAGSWGTAVAIHLAKIGHKTLLWSHNPQHVALMAEQHSNPAYLPGIPFPENLIPSDNLIECVQSANYVIIAVPSHAFAEIINKIPKPTQGLAWLTKGVDPASHELLSQLVASRFGVDFPIAVISGPSFAKEVARFLPTALTLASNNTNYQKKMHQLFHHDNIRVYLSDDLIGVQLCGAVKNILAIACGISDGLGYGANAKAALITRGLAEMTRLGLSMGARQDTFLGLAGVGDLVLTCTDDQSRNRRFGLLLGREVPIPEAEHQIGQVVEGKHNAAQICAIANKNRVEMPICEQINALLHGIVHAQEAVNNLMSRPAKEE.

NADPH contacts are provided by S13, W14, H34, and K105. Sn-glycerol 3-phosphate contacts are provided by K105, G134, and S136. A138 contacts NADPH. Sn-glycerol 3-phosphate contacts are provided by K189, D242, S252, R253, and N254. The active-site Proton acceptor is the K189. Residue R253 participates in NADPH binding. 2 residues coordinate NADPH: V277 and E279.

Belongs to the NAD-dependent glycerol-3-phosphate dehydrogenase family.

Its subcellular location is the cytoplasm. The catalysed reaction is sn-glycerol 3-phosphate + NAD(+) = dihydroxyacetone phosphate + NADH + H(+). It carries out the reaction sn-glycerol 3-phosphate + NADP(+) = dihydroxyacetone phosphate + NADPH + H(+). The protein operates within membrane lipid metabolism; glycerophospholipid metabolism. Its function is as follows. Catalyzes the reduction of the glycolytic intermediate dihydroxyacetone phosphate (DHAP) to sn-glycerol 3-phosphate (G3P), the key precursor for phospholipid synthesis. This chain is Glycerol-3-phosphate dehydrogenase [NAD(P)+], found in Legionella pneumophila (strain Lens).